Reading from the N-terminus, the 428-residue chain is UPF0761 membrane protein TERTU_3006 (428 aa).

The next 7 helical transmembrane spans lie at 47 to 67, 104 to 124, 143 to 163, 189 to 209, 218 to 238, 248 to 268, and 292 to 312; these read LFAL…IPAF, LSGV…RNIE, YLLY…AFLL, VVPW…VPNC, IGGV…GYIV, GAFA…TIIL, and MIVV…GESV.

Belongs to the UPF0761 family.

Its subcellular location is the cell inner membrane. The protein is UPF0761 membrane protein TERTU_3006 of Teredinibacter turnerae (strain ATCC 39867 / T7901).